A 356-amino-acid chain; its full sequence is 3-dehydroquinate synthase (356 aa).

Residues Glu71–Lys76, Gly105–Asp109, Thr129–Ser130, Lys142, and Lys151 each bind NAD(+). The Zn(2+) site is built by Glu184, His247, and His264.

This sequence belongs to the sugar phosphate cyclases superfamily. Dehydroquinate synthase family. The cofactor is Co(2+). Zn(2+) is required as a cofactor. Requires NAD(+) as cofactor.

Its subcellular location is the cytoplasm. The catalysed reaction is 7-phospho-2-dehydro-3-deoxy-D-arabino-heptonate = 3-dehydroquinate + phosphate. It participates in metabolic intermediate biosynthesis; chorismate biosynthesis; chorismate from D-erythrose 4-phosphate and phosphoenolpyruvate: step 2/7. Functionally, catalyzes the conversion of 3-deoxy-D-arabino-heptulosonate 7-phosphate (DAHP) to dehydroquinate (DHQ). In Lactococcus lactis subsp. cremoris (strain MG1363), this protein is 3-dehydroquinate synthase.